Reading from the N-terminus, the 497-residue chain is Glutamate--tRNA ligase (497 aa).

Positions 13 to 23 match the 'HIGH' region motif; that stretch reads PSPTGDPHVGT. The 'KMSKS' region signature appears at 253–257; that stretch reads KISKR. An ATP-binding site is contributed by lysine 256.

Belongs to the class-I aminoacyl-tRNA synthetase family. Glutamate--tRNA ligase type 1 subfamily. As to quaternary structure, monomer.

It is found in the cytoplasm. The enzyme catalyses tRNA(Glu) + L-glutamate + ATP = L-glutamyl-tRNA(Glu) + AMP + diphosphate. In terms of biological role, catalyzes the attachment of glutamate to tRNA(Glu) in a two-step reaction: glutamate is first activated by ATP to form Glu-AMP and then transferred to the acceptor end of tRNA(Glu). The polypeptide is Glutamate--tRNA ligase (Cutibacterium acnes (strain DSM 16379 / KPA171202) (Propionibacterium acnes)).